A 59-amino-acid chain; its full sequence is MAKKPGENTGKNGGIYQEVGPRGGKKDNFATVKDNERLPPTTKPGNGWVLDKRTPDSKK.

The segment at M1–K59 is disordered. Composition is skewed to basic and acidic residues over residues G24–R37 and L50–K59.

This is an uncharacterized protein from Salmonella phage P22 (Bacteriophage P22).